The following is a 770-amino-acid chain: Low-density lipoprotein receptor-related protein 3 (770 aa).

Residues 1 to 36 (MEKRAAAGLEGAPGARAQLAVVCLVNIFLTGRLSSA) form the signal peptide. The Extracellular segment spans residues 37–496 (VPALAACSGK…HGCLAAVPRK (460 aa)). 9 disulfides stabilise this stretch: cysteine 43/cysteine 72, cysteine 99/cysteine 120, cysteine 166/cysteine 178, cysteine 173/cysteine 191, cysteine 185/cysteine 200, cysteine 212/cysteine 227, cysteine 219/cysteine 240, cysteine 234/cysteine 249, and cysteine 254/cysteine 282. Positions 43 to 159 (CSGKLEQHTE…QGFRLSYIRG (117 aa)) constitute a CUB 1 domain. N-linked (GlcNAc...) asparagine glycosylation is present at asparagine 71. LDL-receptor class A domains lie at 165–201 (SCQA…GNCS) and 211–250 (LCPG…AGCP). Asparagine 199 carries N-linked (GlcNAc...) asparagine glycosylation. One can recognise a CUB 2 domain in the interval 254–365 (CGRRLGSFYG…HGFNATYQVK (112 aa)). Asparagine 359 is a glycosylation site (N-linked (GlcNAc...) asparagine). LDL-receptor class A domains follow at residues 415–453 (ACPP…KNCF) and 454–490 (SCQP…HGCL). Cystine bridges form between cysteine 416–cysteine 430, cysteine 423–cysteine 443, cysteine 437–cysteine 452, cysteine 455–cysteine 467, cysteine 462–cysteine 480, and cysteine 474–cysteine 489. Residues 497 to 517 (VITAALIGSLVCGLLLVIALG) traverse the membrane as a helical segment. The Cytoplasmic segment spans residues 518–770 (CAFKLYSLRT…ASDDEALLVC (253 aa)). The disordered stretch occupies residues 635–770 (LGDGFLQPAP…ASDDEALLVC (136 aa)). The segment covering 689–707 (RDPECRPVDKDRKVCREPL) has biased composition (basic and acidic residues). The span at 729-738 (QVSTASSTLG) shows a compositional bias: polar residues. Residues 761-770 (ASDDEALLVC) show a composition bias toward acidic residues.

This sequence belongs to the LDLR family. In terms of assembly, binds GGA1 and GGA2. As to expression, widely expressed. Highly expressed in skeletal muscle and ovary. Expressed at intermediate level in heart, brain, liver, pancreas, prostate and small intestine. Weakly expressed in testis, colon and leukocyte.

It localises to the membrane. Its subcellular location is the coated pit. In terms of biological role, probable receptor, which may be involved in the internalization of lipophilic molecules and/or signal transduction. Its precise role is however unclear, since it does not bind to very low density lipoprotein (VLDL) or to LRPAP1 in vitro. This Homo sapiens (Human) protein is Low-density lipoprotein receptor-related protein 3 (LRP3).